The following is a 318-amino-acid chain: uncharacterized protein (318 aa).

To A.aeolicus AA07 and AA34.

This is an uncharacterized protein from Aquifex aeolicus (strain VF5).